Reading from the N-terminus, the 182-residue chain is Large ribosomal subunit protein uL5 (182 aa).

Belongs to the universal ribosomal protein uL5 family. As to quaternary structure, part of the 50S ribosomal subunit; part of the 5S rRNA/L5/L18/L25 subcomplex. Contacts the 5S rRNA and the P site tRNA. Forms a bridge to the 30S subunit in the 70S ribosome.

Functionally, this is one of the proteins that bind and probably mediate the attachment of the 5S RNA into the large ribosomal subunit, where it forms part of the central protuberance. In the 70S ribosome it contacts protein S13 of the 30S subunit (bridge B1b), connecting the 2 subunits; this bridge is implicated in subunit movement. Contacts the P site tRNA; the 5S rRNA and some of its associated proteins might help stabilize positioning of ribosome-bound tRNAs. This chain is Large ribosomal subunit protein uL5, found in Thermosipho melanesiensis (strain DSM 12029 / CIP 104789 / BI429).